The chain runs to 424 residues: Solute carrier family 67 member A1 (424 aa).

10 helical membrane-spanning segments follow: residues 26 to 46 (ILLT…QFSI), 59 to 79 (IAFG…GPVF), 90 to 110 (AALT…AAAS), 156 to 176 (LGLC…TLVS), 184 to 204 (AILA…CIPA), 243 to 263 (IFLV…MFSI), 276 to 296 (AGYL…LVIG), 312 to 332 (VLVF…FHFC), 334 to 354 (LVPG…SMLI), and 391 to 411 (FGVP…LLVL).

This sequence belongs to the major facilitator (TC 2.A.1) superfamily. Organic cation transporter (TC 2.A.1.19) family. As to quaternary structure, interacts with RNF167. In terms of tissue distribution, expressed at high levels in adult and fetal kidney and liver, and adult colon. Expressed in fetal renal proximal tubules (at protein level). Expressed at lower levels in heart, brain and lung.

It is found in the apical cell membrane. Functionally, may act as a transporter of organic cations based on a proton efflux antiport mechanism. May play a role in the transport of chloroquine and quinidine-related compounds in kidney. Plays a role in the regulation of lipid metabolism. In Homo sapiens (Human), this protein is Solute carrier family 67 member A1.